We begin with the raw amino-acid sequence, 115 residues long: Large ribosomal subunit protein uL18 (115 aa).

This sequence belongs to the universal ribosomal protein uL18 family. Part of the 50S ribosomal subunit; part of the 5S rRNA/L5/L18/L25 subcomplex. Contacts the 5S and 23S rRNAs.

This is one of the proteins that bind and probably mediate the attachment of the 5S RNA into the large ribosomal subunit, where it forms part of the central protuberance. In Rickettsia rickettsii (strain Iowa), this protein is Large ribosomal subunit protein uL18.